A 523-amino-acid polypeptide reads, in one-letter code: Mediator of RNA polymerase II transcription subunit 1.2 (523 aa).

The protein belongs to the Mediator complex subunit 1 family. Component of the Mediator complex.

The protein resides in the nucleus. In terms of biological role, component of the Mediator complex, a coactivator involved in the regulated transcription of nearly all RNA polymerase II-dependent genes. Mediator functions as a bridge to convey information from gene-specific regulatory proteins to the basal RNA polymerase II transcription machinery. Mediator is recruited to promoters by direct interactions with regulatory proteins and serves as a scaffold for the assembly of a functional preinitiation complex with RNA polymerase II and the general transcription factors. The polypeptide is Mediator of RNA polymerase II transcription subunit 1.2 (mdt-1.2) (Caenorhabditis briggsae).